Here is a 4678-residue protein sequence, read N- to C-terminus: E3 ubiquitin-protein ligase MYCBP2 (4678 aa).

3 disordered regions span residues 87–127 (DRDQ…RSKS), 172–192 (SKNS…SKEP), and 609–628 (ASKG…KPYK). Residues 100-124 (SRNKKILNKKKLKRKQKSKSKVKTR) show a composition bias toward basic residues. A phosphoserine mark is found at S127, S178, S181, and S183. RCC1 repeat units follow at residues 600-655 (DGSI…VISK), 699-755 (NGEV…MMCP), 907-957 (KRDK…VLME), 958-1008 (NGDV…VLLM), and 1010-1066 (GQVF…LRID). Residues 898 to 910 (RSHPAQLKHKRDK) show a composition bias toward basic residues. The interval 898 to 928 (RSHPAQLKHKRDKHKDGSGERGEKDASKITT) is disordered. A compositionally biased stretch (basic and acidic residues) spans 911–924 (HKDGSGERGEKDAS). A PHR domain 1 region spans residues 1235-1386 (NRFESHGGGW…GQIPQLLYRL (152 aa)). The residue at position 1624 (S1624) is a Phosphoserine. A PHR domain 2 region spans residues 1726 to 1884 (NRFTKTSQGR…GQIPQILYYR (159 aa)). The cysteines at positions 1748 and 1863 are disulfide-linked. Disordered regions lie at residues 1993-2012 (FNPN…QGLS) and 2321-2340 (QQDQ…VTAA). Over residues 1994–2012 (NPNQSTDSTTGNQPEQGLS) the composition is skewed to polar residues. The RAE1 binding stretch occupies residues 2022-2550 (VIESEHPYKP…NQHLGKSLLV (529 aa)). The stretch at 2341-2443 (SSNTDMTYGG…IDAGLEVKVK (103 aa)) is one Filamin repeat. T2683 carries the post-translational modification Phosphothreonine. 4 disordered regions span residues 2709-2931 (LGNS…LHSE), 2943-2963 (TNSL…VDEG), 2979-3020 (EQEM…EPAK), and 3066-3085 (APIR…ETKL). Residues 2718–2733 (NISTSSKPASTSGKSE) show a composition bias toward polar residues. The segment covering 2742 to 2760 (LKPDGRMSRTTADQKKPRG) has biased composition (basic and acidic residues). S2769 bears the Phosphoserine mark. A compositionally biased stretch (basic and acidic residues) spans 2775 to 2785 (DAAKLRSDSHS). Residues 2786–2810 (RSLSPNHNTLQTLKSDGRMPSSSRA) are compositionally biased toward polar residues. S2787, S2789, S2833, S2839, S2869, S2871, and S2920 each carry phosphoserine. Residues 2828–2843 (PANRSSPSGASSPRSS) are compositionally biased toward low complexity. Positions 2860–2871 (TKLDPPRERSKS) are enriched in basic and acidic residues. A Phosphoserine modification is found at S2985. Positions 2988-3001 (ISRKCANRHTRPKK) are enriched in basic residues. Phosphoserine is present on residues S3090, S3478, and S3505. Residues 3605–3631 (PVEPEEEEDEENKTSKENSEQEKDTRV) are disordered. The span at 3616–3631 (NKTSKENSEQEKDTRV) shows a compositional bias: basic and acidic residues. The DOC domain maps to 3719–3897 (SISIQSGFEA…VAQQRNCEAE (179 aa)). Residues 3915–3934 (SGDAEPTPEQEEKALLSSPE) form a disordered region. Residue T3921 is modified to Phosphothreonine. Phosphoserine is present on residues S3931 and S3932. Residues C4428, C4431, C4446, H4448, H4451, C4454, C4475, C4478, C4544, and C4547 each coordinate Zn(2+). The segment at 4428-4479 (CMICFTEALSAAPAIQLDCSHIFHLQCCRRVLENRWLGPRITFGFISCPICK) adopts an RING-type; atypical zinc-finger fold. A tandem cysteine domain region spans residues 4539–4676 (YAYYVCYKCR…LGCGVCRNAH (138 aa)). C4558 is an active-site residue. Zn(2+) is bound by residues C4575, C4578, C4587, H4590, C4599, C4602, and C4603. C4610 is an active-site residue. Zn(2+) is bound by residues C4617, C4620, C4638, C4652, H4658, C4669, and C4672.

Belongs to the RING-Cys relay (RCR) family. As to quaternary structure, interacts with MYC. Interacts with TSC2 (tuberin) when TSC2 is in complex with TSC1 (hamartin). Interacts with FBXO45. Interacts with RAE1. Interacts with CPNE1 (via VWFA domain) and CPNE4 (via VWFA domain). Interacts with (sumoylated) RANGAP1; interaction with sumoylated RANGAP1 inhibits E3 ubiquitin-protein ligase activity and promotes MYCBP2 translocation to the nucleus. Interacts with RAN. Interacts with ATP13A2; the interaction inhibits the ubiquitination of TSC2 by MYCBP2. Interacts with USP11. Autoubiquitinated. As to expression, expressed in all tissues examined, expression is exceptionally abundant in brain and thymus. Colocalizes with TSC1 and TSC2 along the neurites and in the growth cones. Highly expressed in peripheral and central neurons. Colocalized with TSC1 in one of the filopodial extensions at the tip of a growth cone.

It is found in the nucleus. Its subcellular location is the cell projection. It localises to the axon. The protein resides in the cytoplasm. The protein localises to the cytoskeleton. The enzyme catalyses [E2 ubiquitin-conjugating enzyme]-S-ubiquitinyl-L-cysteine + [acceptor protein]-L-threonine = [E2 ubiquitin-conjugating enzyme]-L-cysteine + [acceptor protein]-3-O-ubiquitinyl-L-threonine.. Its pathway is protein modification; protein ubiquitination. Its function is as follows. Atypical E3 ubiquitin-protein ligase which specifically mediates ubiquitination of threonine and serine residues on target proteins, instead of ubiquitinating lysine residues. Shows esterification activity towards both threonine and serine, with a preference for threonine, and acts via two essential catalytic cysteine residues that relay ubiquitin to its substrate via thioester intermediates. Interacts with the E2 enzymes UBE2D1, UBE2D3, UBE2E1 and UBE2L3. Plays a key role in neural development, probably by mediating ubiquitination of threonine residues on target proteins. Involved in different processes such as regulation of neurite outgrowth, synaptic growth, synaptogenesis and axon degeneration. Required for the formation of major central nervous system axon tracts. Required for proper axon growth by regulating axon navigation and axon branching: acts by regulating the subcellular location and stability of MAP3K12/DLK. Required for proper localization of retinogeniculate projections but not for eye-specific segregation. Regulates axon guidance in the olfactory system. Involved in Wallerian axon degeneration, an evolutionarily conserved process that drives the loss of damaged axons: acts by promoting destabilization of NMNAT2, probably via ubiquitination of NMNAT2. Catalyzes ubiquitination of threonine and/or serine residues on NMNAT2, consequences of threonine and/or serine ubiquitination are however unknown. Regulates the internalization of TRPV1 in peripheral sensory neurons. Mediates ubiquitination and subsequent proteasomal degradation of TSC2/tuberin. Independently of the E3 ubiquitin-protein ligase activity, also acts as a guanosine exchange factor (GEF) for RAN in neurons of dorsal root ganglia. May function as a facilitator or regulator of transcriptional activation by MYC. Acts in concert with HUWE1 to regulate the circadian clock gene expression by promoting the lithium-induced ubiquination and degradation of NR1D1. This Homo sapiens (Human) protein is E3 ubiquitin-protein ligase MYCBP2.